We begin with the raw amino-acid sequence, 684 residues long: Glycine--tRNA ligase beta subunit (684 aa).

The protein belongs to the class-II aminoacyl-tRNA synthetase family. In terms of assembly, tetramer of two alpha and two beta subunits.

Its subcellular location is the cytoplasm. It catalyses the reaction tRNA(Gly) + glycine + ATP = glycyl-tRNA(Gly) + AMP + diphosphate. This chain is Glycine--tRNA ligase beta subunit, found in Stutzerimonas stutzeri (strain A1501) (Pseudomonas stutzeri).